Consider the following 91-residue polypeptide: Tail assembly protein E (91 aa).

The protein belongs to the mulikevirus tail assembly protein family.

Functionally, promotes tail assembly by creating a scaffold for the tail tube proteins. Tail assembly proteins E and E' would wrap the linear tape measure protein to create a tail assembly scaffold. This chain is Tail assembly protein E, found in Escherichia phage P2 (Bacteriophage P2).